Here is a 201-residue protein sequence, read N- to C-terminus: Ribosomal RNA large subunit methyltransferase E (201 aa).

Positions 40, 42, 62, 78, and 101 each coordinate S-adenosyl-L-methionine. Catalysis depends on K141, which acts as the Proton acceptor.

It belongs to the class I-like SAM-binding methyltransferase superfamily. RNA methyltransferase RlmE family.

Its subcellular location is the cytoplasm. It carries out the reaction uridine(2552) in 23S rRNA + S-adenosyl-L-methionine = 2'-O-methyluridine(2552) in 23S rRNA + S-adenosyl-L-homocysteine + H(+). Specifically methylates the uridine in position 2552 of 23S rRNA at the 2'-O position of the ribose in the fully assembled 50S ribosomal subunit. In Anaplasma marginale (strain Florida), this protein is Ribosomal RNA large subunit methyltransferase E.